Reading from the N-terminus, the 358-residue chain is MSEKVKFEKRESLKEKPDTANLGFGQYFTDYMLSVDYDADQGWHDMKIVPYAPFEISPAAQGLHYGQAVFEGLKAYKHNGEVVLFRPDQNFKRINNSLARLEMPEVDEEALLEGLKQLVDVERDWVPEGEGQSLYIRPFVFATEGILGVRSSHQYKLLIILSPSGAYYGGDTLKSTKIYVEDEYVRAVRGGVGFAKVAGNYAASLLAQTNANKLGYDQVLWLDGVEQKYVEEVGSMNIFFVENGKVVTPALNGSILPGITRKSIIQLAEDLGYEVEERRVSIEELFNAYDKGELTEVFGSGTAAVISPVGTLRYEDREIVINNNEPGKITQKLYDTYTGIQSGKLEDKYGWRVEVPKY.

N6-(pyridoxal phosphate)lysine is present on Lys196.

The protein belongs to the class-IV pyridoxal-phosphate-dependent aminotransferase family. Pyridoxal 5'-phosphate is required as a cofactor.

It carries out the reaction L-leucine + 2-oxoglutarate = 4-methyl-2-oxopentanoate + L-glutamate. The enzyme catalyses L-isoleucine + 2-oxoglutarate = (S)-3-methyl-2-oxopentanoate + L-glutamate. It catalyses the reaction L-valine + 2-oxoglutarate = 3-methyl-2-oxobutanoate + L-glutamate. Its pathway is amino-acid biosynthesis; L-isoleucine biosynthesis; L-isoleucine from 2-oxobutanoate: step 4/4. The protein operates within amino-acid biosynthesis; L-leucine biosynthesis; L-leucine from 3-methyl-2-oxobutanoate: step 4/4. It participates in amino-acid biosynthesis; L-valine biosynthesis; L-valine from pyruvate: step 4/4. Functionally, acts on leucine, isoleucine and valine. The polypeptide is Probable branched-chain-amino-acid aminotransferase (ilvE) (Staphylococcus epidermidis (strain ATCC 35984 / DSM 28319 / BCRC 17069 / CCUG 31568 / BM 3577 / RP62A)).